We begin with the raw amino-acid sequence, 445 residues long: MSMTPREIVHELNRHIIGQDDAKRAVAIALRNRWRRMQLPEELRVEVTPKNILMIGPTGVGKTEIARRLAKLANAPFIKVEATKFTEVGYVGRDVESIIRDLADAALKLLREQEMTKVSHRAEDAAEERILDALLPPARMGFNEDAAPASDSNTRQLFRKRLREGQLDDKEIEIEVAEVSGVDISAPPGMEEMTSQLQNLFANMGKGKKKSRKLKVKEALKLVRDEEAGRLVNEEELKAKALEAVEQHGIVFIDEIDKVAKRGNSGGVDVSREGVQRDLLPLIEGCTVNTKLGMVKTDHILFIASGAFHLSKPSDLVPELQGRLPIRVELKALTPGDFERILSEPHASLTEQYRELLKTEGLGIEFQPDGIKRLAEIAWQVNEKTENIGARRLHTLLERLLEEVSFSAGDLAGAQNGEVIKIDADYVNSHLGELAQNEDLSRYIL.

Residues isoleucine 17, 59-64 (GVGKTE), aspartate 254, glutamate 319, and arginine 391 contribute to the ATP site.

It belongs to the ClpX chaperone family. HslU subfamily. A double ring-shaped homohexamer of HslV is capped on each side by a ring-shaped HslU homohexamer. The assembly of the HslU/HslV complex is dependent on binding of ATP.

It is found in the cytoplasm. Functionally, ATPase subunit of a proteasome-like degradation complex; this subunit has chaperone activity. The binding of ATP and its subsequent hydrolysis by HslU are essential for unfolding of protein substrates subsequently hydrolyzed by HslV. HslU recognizes the N-terminal part of its protein substrates and unfolds these before they are guided to HslV for hydrolysis. This Pseudomonas fluorescens (strain SBW25) protein is ATP-dependent protease ATPase subunit HslU.